A 330-amino-acid polypeptide reads, in one-letter code: Ribosomal RNA small subunit methyltransferase H (330 aa).

S-adenosyl-L-methionine-binding positions include 35-37 (GGY), Asp-53, Phe-80, Asp-101, and Gln-108.

The protein belongs to the methyltransferase superfamily. RsmH family.

The protein localises to the cytoplasm. It catalyses the reaction cytidine(1402) in 16S rRNA + S-adenosyl-L-methionine = N(4)-methylcytidine(1402) in 16S rRNA + S-adenosyl-L-homocysteine + H(+). Functionally, specifically methylates the N4 position of cytidine in position 1402 (C1402) of 16S rRNA. This chain is Ribosomal RNA small subunit methyltransferase H, found in Rhodopseudomonas palustris (strain BisB18).